The following is a 156-amino-acid chain: Small ribosomal subunit protein uS7 (156 aa).

Belongs to the universal ribosomal protein uS7 family. Part of the 30S ribosomal subunit. Contacts proteins S9 and S11.

Functionally, one of the primary rRNA binding proteins, it binds directly to 16S rRNA where it nucleates assembly of the head domain of the 30S subunit. Is located at the subunit interface close to the decoding center, probably blocks exit of the E-site tRNA. This Synechococcus sp. (strain JA-3-3Ab) (Cyanobacteria bacterium Yellowstone A-Prime) protein is Small ribosomal subunit protein uS7.